A 342-amino-acid polypeptide reads, in one-letter code: Dihydroorotate dehydrogenase (quinone) (342 aa).

FMN is bound by residues 65–69 (AGLDK) and threonine 89. Substrate is bound at residue lysine 69. 114-118 (NRMGF) lines the substrate pocket. FMN is bound by residues asparagine 142 and asparagine 175. Substrate is bound at residue asparagine 175. The active-site Nucleophile is serine 178. Substrate is bound at residue asparagine 180. FMN-binding residues include lysine 220 and threonine 248. 249–250 (NT) provides a ligand contact to substrate. FMN-binding positions include glycine 271, glycine 300, and 321–322 (YT).

This sequence belongs to the dihydroorotate dehydrogenase family. Type 2 subfamily. As to quaternary structure, monomer. Requires FMN as cofactor.

The protein resides in the cell membrane. It catalyses the reaction (S)-dihydroorotate + a quinone = orotate + a quinol. It participates in pyrimidine metabolism; UMP biosynthesis via de novo pathway; orotate from (S)-dihydroorotate (quinone route): step 1/1. In terms of biological role, catalyzes the conversion of dihydroorotate to orotate with quinone as electron acceptor. The chain is Dihydroorotate dehydrogenase (quinone) from Burkholderia pseudomallei (strain K96243).